Reading from the N-terminus, the 281-residue chain is Undecaprenyl-diphosphatase (281 aa).

6 helical membrane passes run 90-110, 113-133, 147-167, 191-211, 217-237, and 257-277; these read WLVTLGTIPIGVLGLLFQDSI, VLRGFVVIGTTLWLFALVLGA, LSWKHGLLFGLAQALALIPGV, SFLLAIPAVVLSGFYQLYDEL, IAWVPTAVATVVAFVVGYAVI, and IAAAVVVYALVLAGALPAFQG.

Belongs to the UppP family.

Its subcellular location is the cell membrane. It catalyses the reaction di-trans,octa-cis-undecaprenyl diphosphate + H2O = di-trans,octa-cis-undecaprenyl phosphate + phosphate + H(+). Its function is as follows. Catalyzes the dephosphorylation of undecaprenyl diphosphate (UPP). Confers resistance to bacitracin. The chain is Undecaprenyl-diphosphatase from Kineococcus radiotolerans (strain ATCC BAA-149 / DSM 14245 / SRS30216).